We begin with the raw amino-acid sequence, 281 residues long: sn-glycerol-3-phosphate transport system permease protein UgpE (281 aa).

A run of 6 helical transmembrane segments spans residues 16–36 (LILG…AATL), 85–105 (FSIT…IVWF), 113–133 (FFWM…FPTV), 142–162 (LDSY…TFLF), 202–222 (ALFV…LLII), and 247–267 (WNSV…IVLV). Positions 77–268 (LLNSFVMAFS…IPPVVIVLVM (192 aa)) constitute an ABC transmembrane type-1 domain.

It belongs to the binding-protein-dependent transport system permease family. UgpAE subfamily. In terms of assembly, the complex is composed of two ATP-binding proteins (UgpC), two transmembrane proteins (UgpA and UgpE) and a solute-binding protein (UgpB).

Its subcellular location is the cell inner membrane. In terms of biological role, part of the ABC transporter complex UgpBAEC involved in sn-glycerol-3-phosphate (G3P) import. Probably responsible for the translocation of the substrate across the membrane. This chain is sn-glycerol-3-phosphate transport system permease protein UgpE (ugpE), found in Shigella dysenteriae serotype 1 (strain Sd197).